The sequence spans 242 residues: 1-(5-phosphoribosyl)-5-[(5-phosphoribosylamino)methylideneamino] imidazole-4-carboxamide isomerase (242 aa).

Aspartate 8 functions as the Proton acceptor in the catalytic mechanism. Aspartate 129 acts as the Proton donor in catalysis.

It belongs to the HisA/HisF family.

It is found in the cytoplasm. It carries out the reaction 1-(5-phospho-beta-D-ribosyl)-5-[(5-phospho-beta-D-ribosylamino)methylideneamino]imidazole-4-carboxamide = 5-[(5-phospho-1-deoxy-D-ribulos-1-ylimino)methylamino]-1-(5-phospho-beta-D-ribosyl)imidazole-4-carboxamide. The protein operates within amino-acid biosynthesis; L-histidine biosynthesis; L-histidine from 5-phospho-alpha-D-ribose 1-diphosphate: step 4/9. This chain is 1-(5-phosphoribosyl)-5-[(5-phosphoribosylamino)methylideneamino] imidazole-4-carboxamide isomerase, found in Clostridium botulinum (strain Okra / Type B1).